Here is a 547-residue protein sequence, read N- to C-terminus: Chaperonin GroEL (547 aa).

Residues 30–33 (TLGP), K51, 87–91 (DGTTT), G415, and D496 contribute to the ATP site. A disordered region spans residues 528–547 (DKSDMPAMPPGGMGGMGGMY). Over residues 538–547 (GGMGGMGGMY) the composition is skewed to gly residues.

The protein belongs to the chaperonin (HSP60) family. As to quaternary structure, forms a cylinder of 14 subunits composed of two heptameric rings stacked back-to-back. Interacts with the co-chaperonin GroES.

It localises to the cytoplasm. It catalyses the reaction ATP + H2O + a folded polypeptide = ADP + phosphate + an unfolded polypeptide.. Functionally, together with its co-chaperonin GroES, plays an essential role in assisting protein folding. The GroEL-GroES system forms a nano-cage that allows encapsulation of the non-native substrate proteins and provides a physical environment optimized to promote and accelerate protein folding. The chain is Chaperonin GroEL from Chlorobium luteolum (strain DSM 273 / BCRC 81028 / 2530) (Pelodictyon luteolum).